We begin with the raw amino-acid sequence, 118 residues long: Small ribosomal subunit protein uS13 (118 aa).

The tract at residues 93–118 (RGLPVRGQRTKTNARTRKGPRKPIRK) is disordered.

This sequence belongs to the universal ribosomal protein uS13 family. Part of the 30S ribosomal subunit. Forms a loose heterodimer with protein S19. Forms two bridges to the 50S subunit in the 70S ribosome.

Its function is as follows. Located at the top of the head of the 30S subunit, it contacts several helices of the 16S rRNA. In the 70S ribosome it contacts the 23S rRNA (bridge B1a) and protein L5 of the 50S subunit (bridge B1b), connecting the 2 subunits; these bridges are implicated in subunit movement. Contacts the tRNAs in the A and P-sites. The protein is Small ribosomal subunit protein uS13 of Pseudomonas paraeruginosa (strain DSM 24068 / PA7) (Pseudomonas aeruginosa (strain PA7)).